A 534-amino-acid chain; its full sequence is ATP synthase subunit beta 2 (534 aa).

Glycine 185–threonine 192 is a binding site for ATP. Over residues alanine 494–alanine 505 the composition is skewed to basic and acidic residues. The disordered stretch occupies residues alanine 494 to arginine 534.

This sequence belongs to the ATPase alpha/beta chains family. As to quaternary structure, F-type ATPases have 2 components, CF(1) - the catalytic core - and CF(0) - the membrane proton channel. CF(1) has five subunits: alpha(3), beta(3), gamma(1), delta(1), epsilon(1). CF(0) has three main subunits: a(1), b(2) and c(9-12). The alpha and beta chains form an alternating ring which encloses part of the gamma chain. CF(1) is attached to CF(0) by a central stalk formed by the gamma and epsilon chains, while a peripheral stalk is formed by the delta and b chains.

It is found in the cell inner membrane. It carries out the reaction ATP + H2O + 4 H(+)(in) = ADP + phosphate + 5 H(+)(out). Its function is as follows. Produces ATP from ADP in the presence of a proton gradient across the membrane. The catalytic sites are hosted primarily by the beta subunits. The protein is ATP synthase subunit beta 2 of Burkholderia mallei (strain NCTC 10247).